A 500-amino-acid polypeptide reads, in one-letter code: Serine/threonine protein phosphatase 2A 57 kDa regulatory subunit B' kappa isoform (500 aa).

Positions 1 to 53 (MFKQFLSKLPRKSSKSDSGELNRSSSGPVSSPVQRSGTSGGGSGPVRSNSGKR) are disordered. Residues 21 to 37 (LNRSSSGPVSSPVQRSG) show a composition bias toward polar residues.

Belongs to the phosphatase 2A regulatory subunit B56 family. As to quaternary structure, PP2A consists of a common heteromeric enzyme, composed of a catalytic subunit (subunits C), a constant regulatory subunit (subunit A), and a variety of regulatory subunits such as subunits B (the R2/B/PR55/B55, R3/B''/PR72/PR130/PR59 and R5/B'/B56 families).

Its subcellular location is the cytoplasm. The B regulatory subunit may modulate substrate selectivity and catalytic activity, and may also direct the localization of the catalytic enzyme to a particular subcellular compartment. This Arabidopsis thaliana (Mouse-ear cress) protein is Serine/threonine protein phosphatase 2A 57 kDa regulatory subunit B' kappa isoform (B'KAPPA).